We begin with the raw amino-acid sequence, 333 residues long: Chitinase-like protein 2 (333 aa).

The first 27 residues, 1 to 27 (MVSKPLFSLLLLTVALVVFQTGTLVNA), serve as a signal peptide directing secretion. Cysteines 50 and 56 form a disulfide. The N-linked (GlcNAc...) asparagine glycan is linked to N65. C165 and C175 are disulfide-bonded. N-linked (GlcNAc...) asparagine glycans are attached at residues N216 and N252. A disulfide bond links C275 and C313. The segment at 307 to 333 (PHEKLSCADQEPFSSSSSAPPSSGSSS) is disordered. A compositionally biased stretch (low complexity) spans 320-333 (SSSSSAPPSSGSSS).

It belongs to the glycosyl hydrolase 19 family. Mostly expressed in stems, especially in xylem and interfascicular fibers.

It localises to the secreted. In terms of biological role, no chitinase activity. Required for proper cell wall biosynthesis in etiolated seedlings. Prevents lignin accumulation in hypocotyls. The chain is Chitinase-like protein 2 (CTL2) from Arabidopsis thaliana (Mouse-ear cress).